We begin with the raw amino-acid sequence, 967 residues long: Translation initiation factor IF-2 (967 aa).

Disordered stretches follow at residues 201 to 320 (KPIV…PGFV) and 349 to 382 (LQGK…ELEA). Over residues 233–248 (TGPTFSGQTIDLSQFN) the composition is skewed to polar residues. The span at 256 to 272 (PNKGGAKPAGAGNNNNN) shows a compositional bias: low complexity. A compositionally biased stretch (basic residues) spans 354 to 363 (NKSKAAKYRR). The span at 364–382 (DKRDTHRQKSDDEQRELEA) shows a compositional bias: basic and acidic residues. The tr-type G domain occupies 465 to 635 (HRAPIVTVMG…LLEAEVLDLK (171 aa)). Residues 474-481 (GHVDHGKT) are G1. Residue 474-481 (GHVDHGKT) participates in GTP binding. Residues 499–503 (GITQH) are G2. The tract at residues 521–524 (DTPG) is G3. GTP-binding positions include 521 to 525 (DTPGH) and 575 to 578 (NKVD). Positions 575–578 (NKVD) are G4. The segment at 611 to 613 (SAK) is G5.

The protein belongs to the TRAFAC class translation factor GTPase superfamily. Classic translation factor GTPase family. IF-2 subfamily.

Its subcellular location is the cytoplasm. Its function is as follows. One of the essential components for the initiation of protein synthesis. Protects formylmethionyl-tRNA from spontaneous hydrolysis and promotes its binding to the 30S ribosomal subunits. Also involved in the hydrolysis of GTP during the formation of the 70S ribosomal complex. The sequence is that of Translation initiation factor IF-2 from Flavobacterium psychrophilum (strain ATCC 49511 / DSM 21280 / CIP 103535 / JIP02/86).